The primary structure comprises 249 residues: MAKSPARRCTAKVRRVLSRSVLILCWSLLGAAPAHADDSRLGWPLRPPPAVVRQFDAASPNWNPGHRGVDLAGRPGQPVYAAGSATVVFAGLLAGRPVVSLAHPGGLRTSYEPVVAQVRVGQPVSAPTVIGALAAGHPGCQAAACLHWGAMWGPASGANYVDPLGLLKSTPIRLKPLSSEGRTLHYRQAEPVFVNEAAAGALAGAGHRKSPKQGVFRGAAQGGDIVARQPPGRWVCPSSAGGPIGWHRQ.

Residues 1–36 (MAKSPARRCTAKVRRVLSRSVLILCWSLLGAAPAHA) form the signal peptide. Residues 227-249 (ARQPPGRWVCPSSAGGPIGWHRQ) are disordered.

This is an uncharacterized protein from Mycobacterium tuberculosis (strain CDC 1551 / Oshkosh).